The sequence spans 89 residues: Small ribosomal subunit protein uS15 (89 aa).

It belongs to the universal ribosomal protein uS15 family. In terms of assembly, part of the 30S ribosomal subunit. Forms a bridge to the 50S subunit in the 70S ribosome, contacting the 23S rRNA.

Its function is as follows. One of the primary rRNA binding proteins, it binds directly to 16S rRNA where it helps nucleate assembly of the platform of the 30S subunit by binding and bridging several RNA helices of the 16S rRNA. Functionally, forms an intersubunit bridge (bridge B4) with the 23S rRNA of the 50S subunit in the ribosome. This is Small ribosomal subunit protein uS15 from Hahella chejuensis (strain KCTC 2396).